The sequence spans 609 residues: Glutamine--fructose-6-phosphate aminotransferase [isomerizing] (609 aa).

The active-site Nucleophile; for GATase activity is cysteine 2. The Glutamine amidotransferase type-2 domain maps to 2–218 (CGIVGAVAQR…EGDIAEVTRR (217 aa)). SIS domains are found at residues 286–426 (AAKL…LKGV) and 458–599 (LAED…VDQP). Lysine 604 acts as the For Fru-6P isomerization activity in catalysis.

Homodimer.

It localises to the cytoplasm. The catalysed reaction is D-fructose 6-phosphate + L-glutamine = D-glucosamine 6-phosphate + L-glutamate. Its function is as follows. Catalyzes the first step in hexosamine metabolism, converting fructose-6P into glucosamine-6P using glutamine as a nitrogen source. The protein is Glutamine--fructose-6-phosphate aminotransferase [isomerizing] of Photorhabdus laumondii subsp. laumondii (strain DSM 15139 / CIP 105565 / TT01) (Photorhabdus luminescens subsp. laumondii).